We begin with the raw amino-acid sequence, 663 residues long: Epithelial sodium channel subunit gamma-2 (663 aa).

The Cytoplasmic portion of the chain corresponds to 1-55 (MSNSGKKLTQKLKKNLPVTGPQAPTLYELMQWYCLNTNTHGCRRIVVSKGRLRRW). A helical membrane pass occupies residues 56–76 (IWIVLTLIAVALIFWQCALLL). Over 77-544 (MTYYSVSASI…GGQLGLWMSC (468 aa)) the chain is Extracellular. Cystine bridges form between Cys-101/Cys-286, Cys-209/Cys-217, Cys-263/Cys-270, Cys-375/Cys-460, Cys-397/Cys-456, Cys-401/Cys-452, Cys-410/Cys-437, and Cys-412/Cys-426. A helical membrane pass occupies residues 545–565 (SMVCGLEIVEVFFIDSFWVIL). Topologically, residues 566-663 (RQKWHKLCNW…IDSDEDVERF (98 aa)) are cytoplasmic.

The protein belongs to the amiloride-sensitive sodium channel (TC 1.A.6) family. SCNN1G subfamily. As to quaternary structure, component of the heterotrimeric epithelial sodium channel (ENaC) composed of an alpha/SCNN1A, a beta/SCNN1B and a gamma/SCNN1G subunit.

Its subcellular location is the apical cell membrane. The enzyme catalyses Na(+)(in) = Na(+)(out). With respect to regulation, originally identified and characterized by its inhibition by the diuretic drug amiloride. This is one of the three pore-forming subunits of the heterotrimeric epithelial sodium channel (ENaC), a critical regulator of sodium balance and fluid homeostasis. ENaC operates in epithelial tissues, where it mediates the electrodiffusion of sodium ions from extracellular fluid through the apical membrane of cells, with water following osmotically. The chain is Epithelial sodium channel subunit gamma-2 (scnn1g-b) from Xenopus laevis (African clawed frog).